The following is a 215-amino-acid chain: Floral homeotic protein GLOBOSA (215 aa).

In terms of domain architecture, MADS-box spans 3-57 (RGKIEIKRIENSSNRQVTYSKRRNGIMKKAKEISVLCDAHVSVIIFASSGKMHEF). Residues 84–170 (HEHLDNEINR…QFKLRQMHLD (87 aa)) enclose the K-box domain.

The protein localises to the nucleus. Transcription factor involved in the genetic control of flower development. Acts in conjunction with DEFICIENS (defA). The polypeptide is Floral homeotic protein GLOBOSA (GLO) (Antirrhinum majus (Garden snapdragon)).